The sequence spans 427 residues: Flotillin-1 (427 aa).

3 positions are modified to phosphoserine: Ser19, Ser163, and Ser385. Thr387 is modified (phosphothreonine).

Belongs to the band 7/mec-2 family. Flotillin subfamily. As to quaternary structure, heterooligomeric complex of flotillin-1 and flotillin-2 and caveolin-1 and caveolin-2. Interacts with ECPAS.

It localises to the cell membrane. The protein resides in the endosome. Its subcellular location is the membrane. It is found in the caveola. The protein localises to the melanosome. It localises to the membrane raft. In terms of biological role, may act as a scaffolding protein within caveolar membranes, functionally participating in formation of caveolae or caveolae-like vesicles. The polypeptide is Flotillin-1 (FLOT1) (Macaca mulatta (Rhesus macaque)).